The sequence spans 32 residues: Photosystem II reaction center protein Z (32 aa).

The helical transmembrane segment at 12–32 threads the bilayer; the sequence is FGAAAWIGLVLLVGTLYYFVV.

The protein belongs to the PsbZ family. As to quaternary structure, PSII is composed of 1 copy each of membrane proteins PsbA, PsbB, PsbC, PsbD, PsbE, PsbF, PsbH, PsbI, PsbJ, PsbK, PsbL, PsbM, PsbT, PsbY, PsbZ, Psb30/Ycf12, at least 3 peripheral proteins of the oxygen-evolving complex and a large number of cofactors. It forms dimeric complexes.

The protein localises to the plastid. It is found in the chloroplast thylakoid membrane. Functionally, may control the interaction of photosystem II (PSII) cores with the light-harvesting antenna, regulates electron flow through the 2 photosystem reaction centers. PSII is a light-driven water plastoquinone oxidoreductase, using light energy to abstract electrons from H(2)O, generating a proton gradient subsequently used for ATP formation. The polypeptide is Photosystem II reaction center protein Z (Euglena granulata).